An 802-amino-acid chain; its full sequence is Oligophrenin-1 (802 aa).

The PH domain occupies 265 to 368 (QPTIEGYLYT…WMEAMDGKEP (104 aa)). The Rho-GAP domain occupies 380 to 564 (MELNEVGFKF…ILIEHFGKIY (185 aa)). Disordered regions lie at residues 569–589 (EESA…HKPI), 607–770 (LDES…NAGE), and 783–802 (FETA…GDES). The span at 616–627 (HQTPNGTITSSI) shows a compositional bias: polar residues. Basic and acidic residues predominate over residues 716-732 (HHKEGDADSFSKVRPPG).

In terms of assembly, interacts with HOMER1. Interacts with AMPA receptor complexes. Interacts with SH3GL2 (endophilin-A1). Interacts (via C-terminus) with NR1D1.

It is found in the postsynapse. It localises to the presynapse. The protein resides in the cell projection. The protein localises to the axon. Its subcellular location is the dendritic spine. It is found in the dendrite. It localises to the cytoplasm. Stimulates GTP hydrolysis of members of the Rho family. Its action on RHOA activity and signaling is implicated in growth and stabilization of dendritic spines, and therefore in synaptic function. Critical for the stabilization of AMPA receptors at postsynaptic sites. Critical for the regulation of synaptic vesicle endocytosis at pre-synaptic terminals. Required for the localization of NR1D1 to dendrites, can suppress its repressor activity and protect it from proteasomal degradation. The sequence is that of Oligophrenin-1 (OPHN1) from Pan troglodytes (Chimpanzee).